Consider the following 227-residue polypeptide: Orotidine 5'-phosphate decarboxylase (227 aa).

Substrate-binding positions include Asp8, Lys30, 58 to 67 (DLKLYDIPNT), Thr117, Arg177, Gln186, Gly206, and Arg207. Lys60 serves as the catalytic Proton donor.

It belongs to the OMP decarboxylase family. Type 1 subfamily. As to quaternary structure, homodimer.

It carries out the reaction orotidine 5'-phosphate + H(+) = UMP + CO2. It participates in pyrimidine metabolism; UMP biosynthesis via de novo pathway; UMP from orotate: step 2/2. Catalyzes the decarboxylation of orotidine 5'-monophosphate (OMP) to uridine 5'-monophosphate (UMP). The protein is Orotidine 5'-phosphate decarboxylase of Campylobacter lari (strain RM2100 / D67 / ATCC BAA-1060).